The chain runs to 431 residues: Adenylosuccinate lyase (431 aa).

N(6)-(1,2-dicarboxyethyl)-AMP-binding positions include 4–5 (RY), 67–69 (RHD), and 93–94 (TS). Catalysis depends on His-141, which acts as the Proton donor/acceptor. Gln-212 serves as a coordination point for N(6)-(1,2-dicarboxyethyl)-AMP. Residue Ser-262 is the Proton donor/acceptor of the active site. N(6)-(1,2-dicarboxyethyl)-AMP contacts are provided by residues Ser-263, 268 to 270 (KRN), Asn-276, and 307 to 311 (SAERI).

It belongs to the lyase 1 family. Adenylosuccinate lyase subfamily. In terms of assembly, homodimer and homotetramer. Residues from neighboring subunits contribute catalytic and substrate-binding residues to each active site.

The catalysed reaction is N(6)-(1,2-dicarboxyethyl)-AMP = fumarate + AMP. The enzyme catalyses (2S)-2-[5-amino-1-(5-phospho-beta-D-ribosyl)imidazole-4-carboxamido]succinate = 5-amino-1-(5-phospho-beta-D-ribosyl)imidazole-4-carboxamide + fumarate. Its pathway is purine metabolism; AMP biosynthesis via de novo pathway; AMP from IMP: step 2/2. It functions in the pathway purine metabolism; IMP biosynthesis via de novo pathway; 5-amino-1-(5-phospho-D-ribosyl)imidazole-4-carboxamide from 5-amino-1-(5-phospho-D-ribosyl)imidazole-4-carboxylate: step 2/2. Catalyzes two reactions in de novo purine nucleotide biosynthesis. Catalyzes the breakdown of 5-aminoimidazole- (N-succinylocarboxamide) ribotide (SAICAR or 2-[5-amino-1-(5-phospho-beta-D-ribosyl)imidazole-4-carboxamido]succinate) to 5-aminoimidazole-4-carboxamide ribotide (AICAR or 5-amino-1-(5-phospho-beta-D-ribosyl)imidazole-4-carboxamide) and fumarate, and of adenylosuccinate (ADS or N(6)-(1,2-dicarboxyethyl)-AMP) to adenosine monophosphate (AMP) and fumarate. This Staphylococcus haemolyticus (strain JCSC1435) protein is Adenylosuccinate lyase (purB).